Consider the following 445-residue polypeptide: UDP-N-acetylmuramoylalanine--D-glutamate ligase (445 aa).

ATP is bound at residue 118–124 (GTNGKTT).

Belongs to the MurCDEF family.

Its subcellular location is the cytoplasm. It catalyses the reaction UDP-N-acetyl-alpha-D-muramoyl-L-alanine + D-glutamate + ATP = UDP-N-acetyl-alpha-D-muramoyl-L-alanyl-D-glutamate + ADP + phosphate + H(+). It participates in cell wall biogenesis; peptidoglycan biosynthesis. Functionally, cell wall formation. Catalyzes the addition of glutamate to the nucleotide precursor UDP-N-acetylmuramoyl-L-alanine (UMA). This is UDP-N-acetylmuramoylalanine--D-glutamate ligase from Macrococcus caseolyticus (strain JCSC5402) (Macrococcoides caseolyticum).